Consider the following 146-residue polypeptide: Phospho-2-dehydro-3-deoxyheptonate aldolase (146 aa).

Belongs to the class-II DAHP synthase family. Homodimer.

It catalyses the reaction D-erythrose 4-phosphate + phosphoenolpyruvate + H2O = 7-phospho-2-dehydro-3-deoxy-D-arabino-heptonate + phosphate. It participates in metabolic intermediate biosynthesis; chorismate biosynthesis; chorismate from D-erythrose 4-phosphate and phosphoenolpyruvate: step 1/7. The sequence is that of Phospho-2-dehydro-3-deoxyheptonate aldolase from Streptomyces lividans.